A 399-amino-acid chain; its full sequence is Subtilisin-like protease 4 (399 aa).

An N-terminal signal peptide occupies residues 1-19; that stretch reads MVCLKTLSVFLAAFAAADA. Positions 20 to 118 are excised as a propeptide; it reads RAVFKTQGHK…VEQDQVVRIS (99 aa). Positions 38–117 constitute an Inhibitor I9 domain; sequence YIVVMKDGVS…YVEQDQVVRI (80 aa). Asn102 carries an N-linked (GlcNAc...) asparagine glycan. Positions 128 to 399 constitute a Peptidase S8 domain; sequence SWGLGRVSHR…NRLLYNGSGQ (272 aa). Catalysis depends on charge relay system residues Asp160 and His191. Residues Asn252 and Asn308 are each glycosylated (N-linked (GlcNAc...) asparagine). The Charge relay system role is filled by Ser346. N-linked (GlcNAc...) asparagine glycosylation occurs at Asn395.

This sequence belongs to the peptidase S8 family.

It is found in the secreted. Secreted subtilisin-like serine protease with keratinolytic activity that contributes to pathogenicity. The protein is Subtilisin-like protease 4 (SUB4) of Trichophyton tonsurans (Scalp ringworm fungus).